Here is a 96-residue protein sequence, read N- to C-terminus: Large ribosomal subunit protein eL21 (96 aa).

Residues 1–66 (MPSSNGPLEG…FDGQTGTVEG (66 aa)) form a disordered region.

It belongs to the eukaryotic ribosomal protein eL21 family. In terms of assembly, part of the 50S ribosomal subunit. Interacts with protein L18 and binds the 5S rRNA. Has been cross-linked to L18.

In terms of biological role, this is one of 5 proteins that mediate the attachment of the 5S rRNA onto the large ribosomal subunit, stabilizing the orientation of adjacent RNA domains. This chain is Large ribosomal subunit protein eL21 (rpl21e), found in Haloarcula marismortui (strain ATCC 43049 / DSM 3752 / JCM 8966 / VKM B-1809) (Halobacterium marismortui).